The sequence spans 295 residues: 33 kDa chaperonin (295 aa).

Cystine bridges form between C236-C238 and C269-C272.

It belongs to the HSP33 family. Post-translationally, under oxidizing conditions two disulfide bonds are formed involving the reactive cysteines. Under reducing conditions zinc is bound to the reactive cysteines and the protein is inactive.

Its subcellular location is the cytoplasm. Redox regulated molecular chaperone. Protects both thermally unfolding and oxidatively damaged proteins from irreversible aggregation. Plays an important role in the bacterial defense system toward oxidative stress. This chain is 33 kDa chaperonin, found in Geobacter sp. (strain M21).